The chain runs to 387 residues: Alanine racemase (387 aa).

Lysine 38 functions as the Proton acceptor; specific for D-alanine in the catalytic mechanism. Lysine 38 carries the N6-(pyridoxal phosphate)lysine modification. Arginine 136 lines the substrate pocket. Residue tyrosine 267 is the Proton acceptor; specific for L-alanine of the active site. Methionine 316 is a binding site for substrate.

This sequence belongs to the alanine racemase family. It depends on pyridoxal 5'-phosphate as a cofactor.

It carries out the reaction L-alanine = D-alanine. Its pathway is amino-acid biosynthesis; D-alanine biosynthesis; D-alanine from L-alanine: step 1/1. In terms of biological role, catalyzes the interconversion of L-alanine and D-alanine. May also act on other amino acids. This chain is Alanine racemase (alr), found in Clostridium tetani (strain Massachusetts / E88).